Here is a 147-residue protein sequence, read N- to C-terminus: Hemoglobin subunit beta (147 aa).

Position 2 is an N-acetylvaline (V2). The 145-residue stretch at 3-147 (HLTPEEKSAV…VANALAHKYH (145 aa)) folds into the Globin domain. T13 is modified (phosphothreonine). Position 45 is a phosphoserine (S45). At K60 the chain carries N6-acetyllysine. H64 contributes to the heme b binding site. An N6-acetyllysine modification is found at K83. Residue H93 participates in heme b binding. An S-nitrosocysteine modification is found at C94. K145 is subject to N6-acetyllysine.

The protein belongs to the globin family. In terms of assembly, heterotetramer of two alpha chains and two beta chains. Red blood cells.

Functionally, involved in oxygen transport from the lung to the various peripheral tissues. The protein is Hemoglobin subunit beta (HBB) of Gorilla gorilla gorilla (Western lowland gorilla).